We begin with the raw amino-acid sequence, 96 residues long: MSAITRHGDALVIRLYIQPKASRDQIVGLHGDELKVAITAPPVDGQANAHLTKFLAKQFRVAKSLVVIEKGELGRHKQIRITHPQHIPADVAEFIE.

It belongs to the UPF0235 family.

This is UPF0235 protein ECA3630 from Pectobacterium atrosepticum (strain SCRI 1043 / ATCC BAA-672) (Erwinia carotovora subsp. atroseptica).